Consider the following 506-residue polypeptide: Serine/threonine-protein kinase D6PKL1 (506 aa).

A disordered region spans residues 1–96 (MASKYGSGVL…TCSSFSGNNK (96 aa)). Positions 12–23 (ENKKEKGDKETP) are enriched in basic and acidic residues. Residues 24–54 (ETSYSSQSVSVNTLADQVSSTLSFAPSSDSK) are compositionally biased toward polar residues. Residues 55–67 (TGGEVKFNEKSDQ) show a composition bias toward basic and acidic residues. The segment covering 77–92 (STSSDISDESTCSSFS) has biased composition (low complexity). In terms of domain architecture, Protein kinase spans 123–456 (FRLLKRLGCG…ATEMKQHPFF (334 aa)). ATP-binding positions include 129–137 (LGCGDIGTV) and Lys-152. The Proton acceptor role is filled by Asp-248. A disordered region spans residues 475 to 495 (PVDYESAPATPAAATSTSVKS). The segment covering 480–492 (SAPATPAAATSTS) has biased composition (low complexity).

The protein belongs to the protein kinase superfamily. AGC Ser/Thr protein kinase family.

It localises to the cell membrane. It catalyses the reaction L-seryl-[protein] + ATP = O-phospho-L-seryl-[protein] + ADP + H(+). The enzyme catalyses L-threonyl-[protein] + ATP = O-phospho-L-threonyl-[protein] + ADP + H(+). Protein kinase that regulates the auxin transport activity of PIN auxin efflux facilitators by direct phosphorylation. D6PK-mediated PIN phosphorylation promotes auxin transport in the hypocotyl and this is a prerequisite for PHOT1-dependent hypocotyl bending. The protein is Serine/threonine-protein kinase D6PKL1 (D6PKL1) of Arabidopsis thaliana (Mouse-ear cress).